The chain runs to 421 residues: Plant UBX domain-containing protein 5 (421 aa).

A UBA domain is found at 4–45; sequence ETNENLINSFIEITSSSREEANFFLESHTWNLDAAVSTFLDN. Disordered regions lie at residues 46 to 171 and 292 to 338; these read DAAA…MMVQ and ENFT…PSRG. A compositionally biased stretch (polar residues) spans 69-84; the sequence is QSPSQSHSPDYTPSET. Over residues 85 to 102 the composition is skewed to low complexity; it reads SPSPSRSRSASPSSRAAP. The SEP domain occupies 231–295; that stretch reads RIMHTITFWL…DLVRRGENFT (65 aa). Residues 312 to 328 are compositionally biased toward low complexity; sequence GASGSGSSSAPQASSAP. The UBX domain occupies 343–420; that stretch reads PAAPTTSIQL…GIANAVVIQK (78 aa).

In terms of assembly, interacts with CDC48A (non-hexameric) via its UBX domain.

This chain is Plant UBX domain-containing protein 5, found in Arabidopsis thaliana (Mouse-ear cress).